The sequence spans 319 residues: Lipoyl synthase (319 aa).

The interval 5 to 31 (LDTISANPVRPRHPEKANRPDALSPPK) is disordered. [4Fe-4S] cluster is bound by residues Cys61, Cys66, Cys72, Cys87, Cys91, Cys94, and Ser300. Residues 73-289 (WDKKHATFMI…ETVAYTKGFL (217 aa)) form the Radical SAM core domain.

It belongs to the radical SAM superfamily. Lipoyl synthase family. It depends on [4Fe-4S] cluster as a cofactor.

The protein resides in the cytoplasm. The catalysed reaction is [[Fe-S] cluster scaffold protein carrying a second [4Fe-4S](2+) cluster] + N(6)-octanoyl-L-lysyl-[protein] + 2 oxidized [2Fe-2S]-[ferredoxin] + 2 S-adenosyl-L-methionine + 4 H(+) = [[Fe-S] cluster scaffold protein] + N(6)-[(R)-dihydrolipoyl]-L-lysyl-[protein] + 4 Fe(3+) + 2 hydrogen sulfide + 2 5'-deoxyadenosine + 2 L-methionine + 2 reduced [2Fe-2S]-[ferredoxin]. It participates in protein modification; protein lipoylation via endogenous pathway; protein N(6)-(lipoyl)lysine from octanoyl-[acyl-carrier-protein]: step 2/2. Catalyzes the radical-mediated insertion of two sulfur atoms into the C-6 and C-8 positions of the octanoyl moiety bound to the lipoyl domains of lipoate-dependent enzymes, thereby converting the octanoylated domains into lipoylated derivatives. This Nitrobacter winogradskyi (strain ATCC 25391 / DSM 10237 / CIP 104748 / NCIMB 11846 / Nb-255) protein is Lipoyl synthase.